The sequence spans 153 residues: Succinate dehydrogenase assembly factor 2, mitochondrial (153 aa).

This sequence belongs to the SDHAF2 family. In terms of assembly, interacts with the flavoprotein subunit within the SDH catalytic dimer.

It is found in the mitochondrion matrix. Functionally, plays an essential role in the assembly of succinate dehydrogenase (SDH), an enzyme complex (also referred to as respiratory complex II) that is a component of both the tricarboxylic acid (TCA) cycle and the mitochondrial electron transport chain, and which couples the oxidation of succinate to fumarate with the reduction of ubiquinone (coenzyme Q) to ubiquinol. Required for flavinylation (covalent attachment of FAD) of the flavoprotein subunit of the SDH catalytic dimer. This chain is Succinate dehydrogenase assembly factor 2, mitochondrial, found in Candida glabrata (strain ATCC 2001 / BCRC 20586 / JCM 3761 / NBRC 0622 / NRRL Y-65 / CBS 138) (Yeast).